A 311-amino-acid polypeptide reads, in one-letter code: Heparan sulfate glucosamine 3-O-sulfotransferase 1 (311 aa).

The first 20 residues, 1-20 (MTLLLLGAVLLVAQPQLVHS), serve as a signal peptide directing secretion. An N-linked (GlcNAc...) asparagine glycan is attached at N52. 3'-phosphoadenylyl sulfate is bound by residues 68–72 (KGGTR), R151, and S159. Residues N196, N246, and N253 are each glycosylated (N-linked (GlcNAc...) asparagine). Y259 is a 3'-phosphoadenylyl sulfate binding site. Cysteines 260 and 269 form a disulfide. 274–278 (KGRAH) provides a ligand contact to 3'-phosphoadenylyl sulfate.

This sequence belongs to the sulfotransferase 1 family.

Its subcellular location is the golgi apparatus lumen. The enzyme catalyses alpha-D-glucosaminyl-[heparan sulfate](n) + 3'-phosphoadenylyl sulfate = 3-sulfo-alpha-D-glucosaminyl-[heparan sulfate](n) + adenosine 3',5'-bisphosphate + H(+). In terms of biological role, sulfotransferase that utilizes 3'-phospho-5'-adenylyl sulfate (PAPS) to catalyze the transfer of a sulfo group to position 3 of glucosamine residues in heparan. Catalyzes the rate limiting step in the biosynthesis of heparan sulfate (HSact). This modification is a crucial step in the biosynthesis of anticoagulant heparan sulfate as it completes the structure of the antithrombin pentasaccharide binding site. This Mus musculus (Mouse) protein is Heparan sulfate glucosamine 3-O-sulfotransferase 1 (Hs3st1).